The sequence spans 266 residues: Undecaprenyl-diphosphatase (266 aa).

The next 8 helical transmembrane spans lie at 1–21 (MDTF…FLPI), 39–59 (QGLS…VMYF), 87–107 (WWII…KDFI), 115–135 (AVIA…DRMF), 144–164 (VGWK…IPGT), 183–203 (AAAR…AILV), 218–238 (ALSL…HLFL), and 246–266 (MTPF…FMFA).

The protein belongs to the UppP family.

The protein localises to the cell inner membrane. It catalyses the reaction di-trans,octa-cis-undecaprenyl diphosphate + H2O = di-trans,octa-cis-undecaprenyl phosphate + phosphate + H(+). Catalyzes the dephosphorylation of undecaprenyl diphosphate (UPP). Confers resistance to bacitracin. The sequence is that of Undecaprenyl-diphosphatase from Shewanella sediminis (strain HAW-EB3).